Here is a 154-residue protein sequence, read N- to C-terminus: Myoglobin (154 aa).

The 147-residue stretch at 2 to 148 folds into the Globin domain; the sequence is GLSDDEWNHV…FRNDMASKYK (147 aa). Residue His65 participates in nitrite binding. An O2-binding site is contributed by His65. His94 contacts heme b.

This sequence belongs to the globin family. As to quaternary structure, monomeric.

The protein resides in the cytoplasm. It is found in the sarcoplasm. The enzyme catalyses Fe(III)-heme b-[protein] + nitric oxide + H2O = Fe(II)-heme b-[protein] + nitrite + 2 H(+). It carries out the reaction H2O2 + AH2 = A + 2 H2O. Its function is as follows. Monomeric heme protein which primary function is to store oxygen and facilitate its diffusion within muscle tissues. Reversibly binds oxygen through a pentacoordinated heme iron and enables its timely and efficient release as needed during periods of heightened demand. Depending on the oxidative conditions of tissues and cells, and in addition to its ability to bind oxygen, it also has a nitrite reductase activity whereby it regulates the production of bioactive nitric oxide. Under stress conditions, like hypoxia and anoxia, it also protects cells against reactive oxygen species thanks to its pseudoperoxidase activity. The chain is Myoglobin (MB) from Chelonia mydas (Green sea-turtle).